The primary structure comprises 783 residues: Cyclin-dependent kinase 11A (783 aa).

The span at 18–58 shows a compositional bias: basic and acidic residues; sequence QEKKRRKEQEEKAEIKRLKNSDDRDSKRDSLEEGELRDHCM. The interval 18-396 is disordered; that stretch reads QEKKRRKEQE…SALTEGDYVP (379 aa). Residues Ser-47 and Ser-72 each carry the phosphoserine modification. Positions 95–125 are enriched in basic residues; it reads EKVHHRKDEKRKEKWKHARVKEREHERRKRH. 3 stretches are compositionally biased toward basic and acidic residues: residues 126-215, 226-241, and 252-264; these read REEQ…DKVK, PPRE…KPGE, and QLKE…RDLL. A Phosphoserine modification is found at Ser-271. Over residues 279–290 the composition is skewed to low complexity; sequence SAESSSAESGSG. Composition is skewed to acidic residues over residues 291–352 and 371–380; these read SEEE…EERE and ESEEAEEEVG. The Protein kinase domain maps to 427–647; it reads QCLNRIEEGT…VFKELGTPSE (221 aa). Residues 432–440 and Lys-455 contribute to the ATP site; that span reads IEEGTYGVV. Ser-470 bears the Phosphoserine; by CDK7 mark. Thr-476 carries the post-translational modification Phosphothreonine; by CDK7. Asp-550 serves as the catalytic Proton acceptor. Position 577 is a phosphoserine (Ser-577). Tyr-582 is subject to Phosphotyrosine. Thr-583 and Thr-739 each carry phosphothreonine. The tract at residues 721 to 783 is disordered; sequence SMFPTWPAKS…AAGPGFSLKF (63 aa). Ser-740 is modified (phosphoserine).

Belongs to the protein kinase superfamily. CMGC Ser/Thr protein kinase family. CDC2/CDKX subfamily. In terms of assembly, the cleaved p110 isoform, p110C, binds to the serine/threonine kinase PAK1. The p58 isoform but not the p110 isoform or p110C interacts with CCND3. The p110 isoforms are found in large molecular weight complexes containing CCNL1 and SFRS7. Mg(2+) serves as cofactor. Post-translationally, during apoptosis, induced by Fas or tumor necrosis factor, specific CKD11 p110 isoforms are cleaved by caspases to produce a protein (p110C) that contains the C-terminal kinase domain of the CDK11 proteins. In terms of tissue distribution, expressed ubiquitously. Some evidence of isoform-specific tissue distribution.

The protein resides in the cytoplasm. It localises to the nucleus. It carries out the reaction L-seryl-[protein] + ATP = O-phospho-L-seryl-[protein] + ADP + H(+). It catalyses the reaction L-threonyl-[protein] + ATP = O-phospho-L-threonyl-[protein] + ADP + H(+). Its activity is regulated as follows. Phosphorylation at Thr-436 or Tyr-437 inactivates the enzyme, while phosphorylation at Thr-583 activates it. Appears to play multiple roles in cell cycle progression, cytokinesis and apoptosis. The p110 isoforms have been suggested to be involved in pre-mRNA splicing, potentially by phosphorylating the splicing protein SFRS7. The p58 isoform may act as a negative regulator of normal cell cycle progression. This is Cyclin-dependent kinase 11A (CDK11A) from Homo sapiens (Human).